A 355-amino-acid chain; its full sequence is NAD-dependent protein deacylase sirtuin-6 (355 aa).

Position 2 is an N-acetylserine (serine 2). Serine 10 is modified (phosphoserine; by MAPK8). Residues 27–272 (PEELERKVWE…TRLMKHLGLE (246 aa)) form the Deacetylase sirtuin-type domain. An N6-acetyllysine modification is found at lysine 33. NAD(+) is bound by residues alanine 53, threonine 57, phenylalanine 64, arginine 65, tryptophan 71, glutamine 113, and histidine 133. Residue histidine 133 is the Proton acceptor of the active site. Residues cysteine 141, cysteine 144, and cysteine 166 each contribute to the Zn(2+) site. Lysine 170 is covalently cross-linked (Glycyl lysine isopeptide (Lys-Gly) (interchain with G-Cter in ubiquitin)). Cysteine 177 provides a ligand contact to Zn(2+). NAD(+) is bound by residues glycine 214, serine 216, asparagine 240, glutamine 242, and valine 258. The tract at residues 284–355 (RALPPLPRPP…KRVKAKAVPS (72 aa)) is disordered. A compositionally biased stretch (pro residues) spans 287-296 (PPLPRPPTPK). Phosphothreonine is present on threonine 294. Residues serine 303 and serine 330 each carry the phosphoserine modification. Positions 343–355 (RPPKRVKAKAVPS) are enriched in basic residues.

Belongs to the sirtuin family. Class IV subfamily. As to quaternary structure, homodimer; binds to nucleosomes and DNA ends as a homodimer. Interacts with RELA; interferes with RELA binding to target DNA. Interacts with SMARCA5; promoting recruitment of SMARCA5/SNF2H to double-strand breaks (DSBs) sites. Interacts with the mTORC2 complex; preventing the ability of SIRT6 to deacetylate FOXO1. Interacts with the CLOCK-BMAL1 complex; recruited by the CLOCK-BMAL1 complex to regulate expression of clock-controlled genes. Interacts with CSNK2A2; preventing CSNK2A2 localization to the nucleus. In terms of assembly, (Microbial infection) Interacts with Kaposi's sarcoma-associated herpesvirus protein VIRF-1; this interaction prevents SIRT6 deubiquitination by USP10. The cofactor is Zn(2+). Acetylated at Lys-33. Deacetylation at Lys-33 by SIRT1 promotes homomultimerization and binding to double-strand breaks (DSBs) sites. Post-translationally, phosphorylation at Ser-10 by MAPK8/JNK1 in response to oxidative stress stimulates the mono-ADP-ribosyltransferase activity on PARP1, leading to PARP1 recruitment to double-strand breaks (DSBs). In terms of processing, monoubiquitinated at Lys-170 by STUB1/CHIP, preventing its degradation by the proteasome. Deubiquitinated by USP10, also preventing its degradation by the proteasome. Sumoylated, leading to specifically decrease ability to deacetylate histone H3 at 'Lys-56' (H3K56ac).

It is found in the nucleus. Its subcellular location is the chromosome. It localises to the telomere. The protein resides in the endoplasmic reticulum. It catalyses the reaction N(6)-acetyl-L-lysyl-[protein] + NAD(+) + H2O = 2''-O-acetyl-ADP-D-ribose + nicotinamide + L-lysyl-[protein]. The catalysed reaction is N(6)-tetradecanoyl-L-lysyl-[protein] + NAD(+) + H2O = 2''-O-tetradecanoyl-ADP-D-ribose + nicotinamide + L-lysyl-[protein]. It carries out the reaction N(6)-hexadecanoyl-L-lysyl-[protein] + NAD(+) + H2O = 2''-O-hexadecanoyl-ADP-D-ribose + nicotinamide + L-lysyl-[protein]. The enzyme catalyses L-lysyl-[protein] + NAD(+) = N(6)-(ADP-D-ribosyl)-L-lysyl-[protein] + nicotinamide + H(+). It catalyses the reaction L-arginyl-[protein] + NAD(+) = N(omega)-(ADP-D-ribosyl)-L-arginyl-[protein] + nicotinamide + H(+). With respect to regulation, compared to the defatty-acylase activity, the protein deacetylase activity is weak in vitro, and requires activation. The histone deacetylase activity is strongly activated upon binding to nucleosomes and chromatin in vivo. Two molecules of SIRT6 associate with the acidic patch of one nucleosome, while the C-terminal disordered region of SIRT6 associates with nucleosomal DNA, leading to efficient histone deacetylation. The protein-lysine deacetylase activity is also activated by long-chain free fatty-acids. The histone deacetylase activity is specifically repressed by long non-coding RNA lncPRESS1, which binds to SIRT6 and prevents chromatin-binding, thereby promoting stem cell pluripotency. Due to its essential role as tumor suppressor and involvement in DNA repair and life span, extensive research is made for the identification of small compound regulators of SIRT6. Nitro-fatty acids (nitro-oleic acid and nitro-conjugated linoleic acid) strongly stimulate the protein-lysine deacetylase activity by forming a covalent Michael adduct formation with Cys-18. Activated by UBCS039 (4-(pyridin-3-yl)-4,5- dihydropyrrolo[1,2-a]quinoxaline). Inhibited by non-selective hydroxamate trichostatin A inhibitor. Deacetylase activity is activated by fluvastatin and quercetin-based compounds. The protein-lysine deacetylase activity, but not the defatty-acylase activity, is specifically activated by MDL-800 and MDL-801 activators in vivo, enhancing the histone deacetylase and tumor suppressor activities. MDL-800 and MDL-801 selectively activate SIRT6 and not other members of the sirtuin family. The binding-mode of MDL-801 is however subject to discussion. In terms of biological role, NAD-dependent protein deacetylase, deacylase and mono-ADP-ribosyltransferase that plays an essential role in DNA damage repair, telomere maintenance, metabolic homeostasis, inflammation, tumorigenesis and aging. Displays protein-lysine deacetylase or defatty-acylase (demyristoylase and depalmitoylase) activity, depending on the context. Acts as a key histone deacetylase by catalyzing deacetylation of histone H3 at 'Lys-9', 'Lys-18' and 'Lys-56' (H3K9ac, H3K18ac and H3K56ac, respectively), suppressing target gene expression of several transcription factors, including NF-kappa-B. Acts as an inhibitor of transcription elongation by mediating deacetylation of H3K9ac and H3K56ac, preventing release of NELFE from chromatin and causing transcriptional pausing. Involved in DNA repair by promoting double-strand break (DSB) repair: acts as a DSB sensor by recognizing and binding DSB sites, leading to (1) recruitment of DNA repair proteins, such as SMARCA5/SNF2H, and (2) deacetylation of histone H3K9ac and H3K56ac. SIRT6 participation to DSB repair is probably involved in extension of life span. Also promotes DNA repair by deacetylating non-histone proteins, such as DDB2 and p53/TP53. Specifically deacetylates H3K18ac at pericentric heterochromatin, thereby maintaining pericentric heterochromatin silencing at centromeres and protecting against genomic instability and cellular senescence. Involved in telomere maintenance by catalyzing deacetylation of histone H3 in telomeric chromatin, regulating telomere position effect and telomere movement in response to DNA damage. Required for embryonic stem cell differentiation by mediating histone deacetylation of H3K9ac. Plays a major role in metabolism by regulating processes such as glycolysis, gluconeogenesis, insulin secretion and lipid metabolism. Inhibits glycolysis via histone deacetylase activity and by acting as a corepressor of the transcription factor HIF1A, thereby controlling the expression of multiple glycolytic genes. Has tumor suppressor activity by repressing glycolysis, thereby inhibiting the Warburg effect. Also regulates glycolysis and tumorigenesis by mediating deacetylation and nuclear export of non-histone proteins, such as isoform M2 of PKM (PKM2). Acts as a negative regulator of gluconeogenesis by mediating deacetylation of non-histone proteins, such as FOXO1 and KAT2A/GCN5. Promotes beta-oxidation of fatty acids during fasting by catalyzing deacetylation of NCOA2, inducing coactivation of PPARA. Acts as a regulator of lipid catabolism in brown adipocytes, both by catalyzing deacetylation of histones and non-histone proteins, such as FOXO1. Also acts as a regulator of circadian rhythms, both by regulating expression of clock-controlled genes involved in lipid and carbohydrate metabolism, and by catalyzing deacetylation of PER2. The defatty-acylase activity is specifically involved in regulation of protein secretion. Has high activity toward long-chain fatty acyl groups and mediates protein-lysine demyristoylation and depalmitoylation of target proteins, such as RRAS2 and TNF, thereby regulating their secretion. Also acts as a mono-ADP-ribosyltransferase by mediating mono-ADP-ribosylation of PARP1, TRIM28/KAP1 or SMARCC2/BAF170. Mono-ADP-ribosyltransferase activity is involved in DNA repair, cellular senescence, repression of LINE-1 retrotransposon elements and regulation of transcription. This is NAD-dependent protein deacylase sirtuin-6 from Homo sapiens (Human).